The sequence spans 32 residues: Photosystem II reaction center protein Psb30 (32 aa).

A helical transmembrane segment spans residues 3-23 (IVIVQLGSLALITLAGPIIIV).

Belongs to the Psb30/Ycf12 family. PSII is composed of 1 copy each of membrane proteins PsbA, PsbB, PsbC, PsbD, PsbE, PsbF, PsbH, PsbI, PsbJ, PsbK, PsbL, PsbM, PsbT, PsbY, PsbZ, Psb30/Ycf12, peripheral proteins of the oxygen-evolving complex and a large number of cofactors. It forms dimeric complexes.

The protein resides in the plastid. The protein localises to the chloroplast thylakoid membrane. Its function is as follows. A core subunit of photosystem II (PSII), probably helps stabilize the reaction center. The chain is Photosystem II reaction center protein Psb30 from Euglena viridis (Cercaria viridis).